Consider the following 813-residue polypeptide: MAAAAPKRRMGLEKIGLYDVGRAIGKGNFATVRIARHRIAKTKVAVKSIDVSKLDKENLIKLEREVKIVTMIDHPHIVKCYEIMRVDNMLYIVSEYCSTGELYATLMGKGRVTEDIARKWFTETAAAVSYLHNKGIVHRDLKTENILLGKDSKIKLIDFGFSNFQTPDQLLNTWCGSPPYAAPELLLGNSYDGMKADIWSMGVLLYILVTGGFPFGSESVNDLKRSVLSGVVKIPYWVSVECADFIRKMLVLNPTKRMTIQNVLAHRWMHIRNDVKKQVQNLESSIRPTPSKLNPTIMMFMQQHGKWTEEQIIDAVLGRNFESPIFATYELLADKVKIGSLEGTGEEYPRRGSRGSILSGRANVDEQPLTPTISAHQLAQLNLSSPDCDSDDSSNSDLCDESPLSSLEPNHKQFTLPRGLDLMGNRFENRRHTLCASEQLLSPNLMGQFPPPNLLLNNFTMSPLGFPPMPEGQAAEFPFPSLHPALGAFPTTDLSKMLPVPKSERRASAGETLLPTNFDLQQHLANLSANPVSFPTVEEEGRSYLAKYGGKRNTVHCLGNQIGGGVQNPIPRYQRTPYAKAPPAERRSSWASPSLSQQQQSHLEKIFKDALQTNNDISRLHKEFKNLSHGCAQSQITNEGSSLACPQISITDEYNRQHNIAPSASSFDPVSIFQKNAQEVVFGQRPATAIGFSSTSFSGMSTPEQTTRSMDDRVRSIVCTLPFAEVVEELKSSLNILKIPFAETQEMVYEPQVTEMRRLSLPSGVEIGVAVLPPEHKSHVEFAIINNDSPTSEILCDQLICRLRMIDPNWSSE.

Residues 18–269 (YDVGRAIGKG…IQNVLAHRWM (252 aa)) form the Protein kinase domain. Residues 24-32 (IGKGNFATV) and lysine 47 contribute to the ATP site. Aspartate 140 serves as the catalytic Proton acceptor. The disordered stretch occupies residues 383 to 412 (LSSPDCDSDDSSNSDLCDESPLSSLEPNHK). Acidic residues predominate over residues 388–400 (CDSDDSSNSDLCD).

Belongs to the protein kinase superfamily. CAMK Ser/Thr protein kinase family. SNF1 subfamily. In terms of assembly, interacts with tax-6. Mg(2+) is required as a cofactor. Post-translationally, autophosphorylated. Elevated cAMP levels appears to act via PKA to directly or indirectly phosphorylate multiple sites on kin-29 and inhibit function.

It localises to the cytoplasm. The protein localises to the nucleus. The enzyme catalyses L-seryl-[protein] + ATP = O-phospho-L-seryl-[protein] + ADP + H(+). It catalyses the reaction L-threonyl-[protein] + ATP = O-phospho-L-threonyl-[protein] + ADP + H(+). Regulates chemoreceptor expression by phosphorylating the hda-4 class II histone deacetylase (HDAC) and inhibiting the gene repression functions of hda-4 and the mef-2 transcription factor, enabling the correct sensing and transduction of food signals. Role in determining body size, the dauer decision and serotonin-mediated egg laying. May modulate the Sma/Mab pathway and regulates development in the later larval stages. The chain is Serine/threonine-protein kinase kin-29 from Caenorhabditis briggsae.